We begin with the raw amino-acid sequence, 30 residues long: Snaclec carinactivase-1 regulatory subunit 14 kDa chain (30 aa).

The C-type lectin domain occupies 1 to 30; sequence DCLPDWFHYEGHCYRVFDEPKKWADAEKFC. Cys2 and Cys13 form a disulfide bridge.

Belongs to the snaclec family. As to quaternary structure, heterodimer of a metalloproteinase subunit and a regulatory subunit comprising two polypeptides disulfide-linked (14 kDa and 17 kDa chains). In terms of tissue distribution, expressed by the venom gland.

The protein localises to the secreted. In terms of biological role, calcium-dependent prothrombin activator. This protein may activate prothrombin via recognition by the regulatory subunit of the calcium ion bound conformation of its gamma-carboxyglutamic acid (GLA) domain, and the subsequent conversion of prothrombin to active thrombin is catalyzed by the catalytic subunit. The chain is Snaclec carinactivase-1 regulatory subunit 14 kDa chain from Echis carinatus (Saw-scaled viper).